We begin with the raw amino-acid sequence, 313 residues long: MMKGAKFSSLLVLFFIFPIAFAQLRVGFYSQSCPQAETIVRNLVRQRFGVTPTVTAALLRMHFHDCFVKGCDASLLIDSTNSEKTAGPNGSVREFDLIDRIKAQLEAACPSTVSCADIVTLATRDSVALAGGPSYSIPTGRRDGRVSNNLDVTLPGPTISVSGAVSLFTNKGMNTFDAVALLGAHTVGQGNCGLFSDRITSFQGTGRPDPSMDPALVTSLRNTCRNSATAALDQSSPLRFDNQFFKQIRKRRGVLQVDQRLASDPQTRGIVARYANNNAFFKRQFVRAMVKMGAVDVLTGRNGEIRRNCRRFN.

Residues 1–22 form the signal peptide; the sequence is MMKGAKFSSLLVLFFIFPIAFA. Intrachain disulfides connect cysteine 33–cysteine 109, cysteine 66–cysteine 71, cysteine 115–cysteine 309, and cysteine 192–cysteine 224. Catalysis depends on histidine 64, which acts as the Proton acceptor. The Ca(2+) site is built by aspartate 65, valine 68, glycine 70, aspartate 72, and serine 74. A substrate-binding site is contributed by proline 155. Histidine 185 contributes to the heme b binding site. Threonine 186 contacts Ca(2+). Positions 233, 236, and 241 each coordinate Ca(2+).

The protein belongs to the peroxidase family. Classical plant (class III) peroxidase subfamily. The cofactor is heme b. Requires Ca(2+) as cofactor. Mainly expressed in roots.

Its subcellular location is the secreted. It catalyses the reaction 2 a phenolic donor + H2O2 = 2 a phenolic radical donor + 2 H2O. Functionally, removal of H(2)O(2), oxidation of toxic reductants, biosynthesis and degradation of lignin, suberization, auxin catabolism, response to environmental stresses such as wounding, pathogen attack and oxidative stress. These functions might be dependent on each isozyme/isoform in each plant tissue. The sequence is that of Peroxidase 57 (PER57) from Arabidopsis thaliana (Mouse-ear cress).